A 90-amino-acid chain; its full sequence is [Leu8]-phyllolitorin (90 aa).

A signal peptide spans 1-30 (MSAVPFTRVLLISGFLAHLLLSTFVTLTVC). The propeptide occupies 31–48 (KEVTEESDDLSKRNVLQR). Gln49 bears the Pyrrolidone carboxylic acid mark. Met57 bears the Methionine amide mark. The propeptide occupies 61–90 (SLENTNRRSDEDMEISALFRGSPLKVKRSD).

It belongs to the bombesin/neuromedin-B/ranatensin family. Expressed by the skin glands.

It is found in the secreted. This is [Leu8]-phyllolitorin from Phyllomedusa sauvagei (Sauvage's leaf frog).